A 174-amino-acid polypeptide reads, in one-letter code: Membrane protein NfeD2 (174 aa).

The next 3 membrane-spanning stretches (helical) occupy residues 16 to 36, 47 to 67, and 72 to 92; these read LIIAGSLTLLFLFFGDVFSGL, LVLSFFTCFSAGGYIGELVLP, and LIALLSCILSIMLVVLLHIFV.

The protein belongs to the NfeD family.

The protein resides in the cell membrane. It is found in the membrane raft. Functionally, plays a role in assembly of FloT membrane rafts, probably recruited to rafts by FloT. This chain is Membrane protein NfeD2, found in Bacillus subtilis (strain 168).